We begin with the raw amino-acid sequence, 249 residues long: Glucosamine-6-phosphate deaminase (249 aa).

D67 acts as the Proton acceptor; for enolization step in catalysis. The For ring-opening step role is filled by N136. H138 (proton acceptor; for ring-opening step) is an active-site residue. The For ring-opening step role is filled by E143.

It belongs to the glucosamine/galactosamine-6-phosphate isomerase family. NagB subfamily.

The catalysed reaction is alpha-D-glucosamine 6-phosphate + H2O = beta-D-fructose 6-phosphate + NH4(+). The protein operates within amino-sugar metabolism; N-acetylneuraminate degradation; D-fructose 6-phosphate from N-acetylneuraminate: step 5/5. In terms of biological role, catalyzes the reversible isomerization-deamination of glucosamine 6-phosphate (GlcN6P) to form fructose 6-phosphate (Fru6P) and ammonium ion. The chain is Glucosamine-6-phosphate deaminase from Clostridioides difficile (strain 630) (Peptoclostridium difficile).